Here is a 224-residue protein sequence, read N- to C-terminus: MRLTDVNSIKEALLEGKVVRIYHSGERNPKISEILEIARKKGVPIYRKDGERFSAEVSPIKYADFEFIVKKALTGGSFILFLDNVVDQRNIGACIRTAEFFGAAGVVLPKRRVGSIQEGAVKASAGAVFHIPIARVENFASAIKKLKKLGFTTLAADLDGEDLEAVSLLLPAAVVIGGEDRGVSRPVKKQCDFVVKIPGVGKVNSLNLSVAAGIFLYTLSRQKY.

Glycine 177, isoleucine 197, and leucine 206 together coordinate S-adenosyl-L-methionine.

This sequence belongs to the class IV-like SAM-binding methyltransferase superfamily. RNA methyltransferase TrmH family.

This is an uncharacterized protein from Archaeoglobus fulgidus (strain ATCC 49558 / DSM 4304 / JCM 9628 / NBRC 100126 / VC-16).